A 189-amino-acid polypeptide reads, in one-letter code: DAN domain family member 5 (189 aa).

The signal sequence occupies residues 1 to 22; that stretch reads MLLGQLSTLLCLLSGALPTGSG. The N-linked (GlcNAc...) asparagine glycan is linked to asparagine 38. Disulfide bonds link cysteine 101–cysteine 148, cysteine 115–cysteine 162, cysteine 125–cysteine 183, and cysteine 129–cysteine 185. The 86-residue stretch at 101-186 folds into the CTCK domain; it reads CKAVPFVQVF…TMLIEGCHCS (86 aa).

This sequence belongs to the DAN family. Expressed in the retina, in inner segments of photoreceptors, at or close to the outer plexiform layer and in the ganglion cell layer (at protein level).

The protein localises to the secreted. Its function is as follows. Antagonist of the extracellular signaling protein NODAL, which is required for correct left-right patterning during embryonic development. Antagonist of BMP and TGF-beta signaling. Independently of its role in left-right axis establishment, plays a role during heart development, possibly through the regulation of TGF-beta/Nodal signaling pathway. Displays anti-angiogenic activity by inhibiting endothelial sprouting, migration, and proliferation. Once internalized by endothelial cells, may alter their redox and glycolytic balance. This Homo sapiens (Human) protein is DAN domain family member 5 (DAND5).